Here is a 414-residue protein sequence, read N- to C-terminus: Serine/threonine transporter SstT (414 aa).

Helical transmembrane passes span 16–36 (GSLV…AWIS), 46–66 (LGTL…LMLV), 84–104 (ILFL…VFSF), 143–163 (ALLN…GFAL), 180–200 (AVTF…FGLV), 219–239 (LVVL…LLVF), 300–320 (MAGA…TLGV), and 332–352 (VVAS…LLLI).

Belongs to the dicarboxylate/amino acid:cation symporter (DAACS) (TC 2.A.23) family.

It localises to the cell inner membrane. It catalyses the reaction L-serine(in) + Na(+)(in) = L-serine(out) + Na(+)(out). The enzyme catalyses L-threonine(in) + Na(+)(in) = L-threonine(out) + Na(+)(out). Its function is as follows. Involved in the import of serine and threonine into the cell, with the concomitant import of sodium (symport system). The sequence is that of Serine/threonine transporter SstT from Salmonella agona (strain SL483).